Reading from the N-terminus, the 74-residue chain is Kappa-stichotoxin-Sgt4a (74 aa).

The first 22 residues, 1–22 (MKFQVIAAVLLIEFCLCVVVTA), serve as a signal peptide directing secretion. Positions 23–39 (RMELQDVEDVENGFQKR) are excised as a propeptide. One can recognise a ShKT domain in the interval 42–74 (CIDTIPQSRCTAFQCKHSMKYRLSFCRKTCGTC). 3 cysteine pairs are disulfide-bonded: Cys42–Cys74, Cys51–Cys67, and Cys56–Cys71.

Belongs to the sea anemone type 1 potassium channel toxin family. Type 1a subfamily.

Its subcellular location is the secreted. The protein localises to the nematocyst. In terms of biological role, inhibits voltage-gated potassium channels (Kv) with higher potency for Kv1.1/KCNA1 and Kv1.3/KCNA3. In Stichodactyla gigantea (Giant carpet anemone), this protein is Kappa-stichotoxin-Sgt4a.